The primary structure comprises 489 residues: Protein DETOXIFICATION 26 (489 aa).

12 consecutive transmembrane segments (helical) span residues 42 to 62, 75 to 95, 125 to 145, 157 to 177, 190 to 210, 217 to 237, 271 to 291, 300 to 320, 342 to 362, 385 to 405, 416 to 436, and 442 to 462; these read IWYIVGPSIFTGLATYSILII, LAAISIINNFTLGFNYGLLLG, IILFLCCILLLPMYLFATPIL, LTGTIALWVIPVHFAFAFFFP, VIAISAGVSLAVHILVCWFFV, IIGTMASVNVPWWLNIFILFL, IMLCLENWYYKILMLMTGNLV, LSICMSVNGWEMMIPLAFFAG, IVSITLSLMIGLFFTVIIVIF, VLLAFTVLLNSVQPVLSGVAV, INLGCYYLIGLPFGLTMGWIF, and GIWAGMIFGGTAIQTLILIII.

It belongs to the multi antimicrobial extrusion (MATE) (TC 2.A.66.1) family.

The protein resides in the membrane. This chain is Protein DETOXIFICATION 26, found in Arabidopsis thaliana (Mouse-ear cress).